The following is a 419-amino-acid chain: UDP-N-acetylglucosamine 1-carboxyvinyltransferase (419 aa).

Phosphoenolpyruvate is bound at residue 22–23; sequence KN. UDP-N-acetyl-alpha-D-glucosamine is bound at residue R93. C117 functions as the Proton donor in the catalytic mechanism. C117 is modified (2-(S-cysteinyl)pyruvic acid O-phosphothioketal). UDP-N-acetyl-alpha-D-glucosamine-binding positions include 122–126, D308, and I330; that span reads RPVDL.

This sequence belongs to the EPSP synthase family. MurA subfamily.

Its subcellular location is the cytoplasm. It carries out the reaction phosphoenolpyruvate + UDP-N-acetyl-alpha-D-glucosamine = UDP-N-acetyl-3-O-(1-carboxyvinyl)-alpha-D-glucosamine + phosphate. It participates in cell wall biogenesis; peptidoglycan biosynthesis. In terms of biological role, cell wall formation. Adds enolpyruvyl to UDP-N-acetylglucosamine. In Pseudomonas putida (Arthrobacter siderocapsulatus), this protein is UDP-N-acetylglucosamine 1-carboxyvinyltransferase.